The sequence spans 326 residues: 2-dehydropantoate 2-reductase (326 aa).

NADP(+) contacts are provided by residues Gly7–Gly12 and Asn103. Asn103 is a binding site for substrate. Residue Lys205 is the Proton donor of the active site. Residues Asn209, Asn213, and Ser274 each coordinate substrate. Glu286 provides a ligand contact to NADP(+).

Belongs to the ketopantoate reductase family.

It localises to the cytoplasm. The enzyme catalyses (R)-pantoate + NADP(+) = 2-dehydropantoate + NADPH + H(+). It participates in cofactor biosynthesis; (R)-pantothenate biosynthesis; (R)-pantoate from 3-methyl-2-oxobutanoate: step 2/2. Functionally, catalyzes the NADPH-dependent reduction of ketopantoate into pantoic acid. This Mesorhizobium japonicum (strain LMG 29417 / CECT 9101 / MAFF 303099) (Mesorhizobium loti (strain MAFF 303099)) protein is 2-dehydropantoate 2-reductase.